Consider the following 380-residue polypeptide: Aminomethyltransferase (380 aa).

The protein belongs to the GcvT family. The glycine cleavage system is composed of four proteins: P, T, L and H.

It catalyses the reaction N(6)-[(R)-S(8)-aminomethyldihydrolipoyl]-L-lysyl-[protein] + (6S)-5,6,7,8-tetrahydrofolate = N(6)-[(R)-dihydrolipoyl]-L-lysyl-[protein] + (6R)-5,10-methylene-5,6,7,8-tetrahydrofolate + NH4(+). Functionally, the glycine cleavage system catalyzes the degradation of glycine. The polypeptide is Aminomethyltransferase (Koribacter versatilis (strain Ellin345)).